Reading from the N-terminus, the 366-residue chain is Leucine dehydrogenase (366 aa).

Lys80 is a catalytic residue. 180–186 (GVGHVAY) is a binding site for NAD(+).

The protein belongs to the Glu/Leu/Phe/Val dehydrogenases family. Homooctamer.

The catalysed reaction is L-leucine + NAD(+) + H2O = 4-methyl-2-oxopentanoate + NH4(+) + NADH + H(+). It functions in the pathway amino-acid degradation; L-leucine degradation; 4-methyl-2-oxopentanoate from L-leucine (dehydrogenase route): step 1/1. With respect to regulation, inhibited by pyridoxal phosphate. Catalyzes the reversible deamination of L-leucine to 4-methyl-2-oxopentanoate. Exhibits the highest activity with L-leucine as substrate, but can also use other L-amino acids such as L-isoleucine, L-valine and L-2-aminovaleric acid. All of the oxo analogs of the amino acid substrates serve as good substrates for the reverse reaction. This is Leucine dehydrogenase (ldh) from Thermoactinomyces intermedius.